Reading from the N-terminus, the 1257-residue chain is MNGYVDFSPSPTSPTQEPGEPQPTQAVLQEDVDMSSGSSGNENCSTGRDSQGSDCDDSGKELRMLVESSNTHPSPDDTFRLMMTEAEHNPSTSGCSSEQSAKADAHKELIRTLRELKVHLPADKKAKGKASTLATLKYALRSVKQVKANEEYYQLLMSSESQPCSVDVPSYTMEQVEGITSEYIVKNSDMFAVAVSLVSGKILYISNQVAPIFHCKKDAFSDAKFVEFLAPHDVSVFHSYTTPYKLPPWSVSSGLDSFTQECMEEKSFFCRVSVGKHHENEIRYQPFRMTPYLVKVQEQKGAASQLCCLLLAERVHSGYEAPRIPPEKRIFTTTHTPNCLFQDVDERAVPLLGYLPQDLIETPVLVQLHPSDRPLMLAIHKKILQASGQPFDYSPIRFRTRNGEYITLDTSWSSFINPWSRKISFIIGRHKVRVGPLNEDVFAASPCPEEKTPHPSVQELTEQIHRLLMQPVPHSGSSGYGSLGSNGSHEHLMSQTSSSDSNGQEESHWRRSGIFKTSGKSQSKSHFSPESGGQKEASVAEMQSSPPAQVRSVTTMERDSSGASLPKASFPEELTYKSQPPCSYQQISCLDSVIRYLESCNEAATLKRKCEFPANIPSRKATVSPGLHSGEAARSSKVTSHTEVSAHLSSLALPGKAESVVSLTSQCSYSSTIVHVGDKKPQPELETVEDVASGPESQDDAAGGLSQEKGSLQKLGLTKEVLAAHTQREEQGFLQRFREVSRLGALQAHCQNYLQERSRAPASDRGLRNASGIESSWKKTGKNRKLKSKRVKTRDSSESTGSGGPVSHRPPLVGLNATAWSPSDTSQSSCPSAPFPAPVPAYPLPVFPAPGIVSTPGTVVAPPAAAHTGFTMPVVPMGTQPEFAVQPLPFAAPLAPVMAFMLPSYPFPPATPNLPQAFFPSQPHFPAHPTLASEITPASQAEFPSRTSMLRQPCACPVTPPAGTVALGRASPPLFQSRGSSPLQLNLLQLEEAPESSTGAAGTLGTTGTAASGLDCTSGASRDRQPKAPPTCSEPSDTQNSDAISTSSDLLNLLLGEDLCSATGSALSRSGASATSDSLGSSSLGCDTSRSGAGSSDTSHTSKYFGSIDSSENNHKAKMITDTEESEQFIKYVLQDPIWLLMANTDDNIMMTYQLPSRDLQAVLKEDQEKLKLLQRSQPHFTEGQRRELREVHPWVHTGGLPTAIDVTGCVYCESEEKGNLCLPYEEDSPSLGLCDTSEAKEEESGQLANPRKEAQT.

The segment at 1–59 is disordered; that stretch reads MNGYVDFSPSPTSPTQEPGEPQPTQAVLQEDVDMSSGSSGNENCSTGRDSQGSDCDDSG. Over residues 8 to 25 the composition is skewed to low complexity; that stretch reads SPSPTSPTQEPGEPQPTQ. The span at 35-53 shows a compositional bias: polar residues; that stretch reads SSGSSGNENCSTGRDSQGS. Positions 109 to 118 match the Nuclear export signal 1 motif; the sequence is LIRTLRELKV. Positions 179-246 constitute a PAS 1 domain; the sequence is ITSEYIVKNS…FHSYTTPYKL (68 aa). The short motif at 306 to 310 is the LXXLL element; sequence LCCLL. One can recognise a PAS 2 domain in the interval 319-385; the sequence is YEAPRIPPEK…MLAIHKKILQ (67 aa). The PAC domain maps to 393–436; that stretch reads YSPIRFRTRNGEYITLDTSWSSFINPWSRKISFIIGRHKVRVGP. A Nuclear export signal 2 motif is present at residues 460 to 469; it reads LTEQIHRLLM. Positions 471–567 are disordered; the sequence is PVPHSGSSGY…RDSSGASLPK (97 aa). The interval 478-482 is important for protein stability; sequence SGYGS. 2 stretches are compositionally biased toward polar residues: residues 493–504 and 518–528; these read MSQTSSSDSNGQ and SGKSQSKSHFS. A CSNK1E binding domain region spans residues 510–709; that stretch reads RRSGIFKTSG…DAAGGLSQEK (200 aa). 5 positions are modified to phosphoserine: Ser525, Ser528, Ser531, Ser538, and Ser544. The segment covering 541-555 has biased composition (polar residues); that stretch reads EMQSSPPAQVRSVTT. Thr554 carries the post-translational modification Phosphothreonine. Phosphoserine occurs at positions 659, 693, 697, 706, 758, and 763. Disordered stretches follow at residues 678–706 and 757–833; these read DKKP…GGLS and RSRA…CPSA. The Nuclear localization signal signature appears at 778–794; it reads KKTGKNRKLKSKRVKTR. The segment covering 779 to 792 has biased composition (basic residues); that stretch reads KTGKNRKLKSKRVK. Over residues 821-832 the composition is skewed to low complexity; sequence SPSDTSQSSCPS. Thr858 bears the Phosphothreonine mark. The interaction with PPARG stretch occupies residues 882-1067; the sequence is EFAVQPLPFA…DLCSATGSAL (186 aa). Residue Ser939 is modified to Phosphoserine. Position 964 is a phosphothreonine (Thr964). Ser971 carries the phosphoserine modification. The Nuclear export signal 3 motif lies at 983-990; sequence LQLNLLQL. Residues 993–1044 are disordered; it reads APESSTGAAGTLGTTGTAASGLDCTSGASRDRQPKAPPTCSEPSDTQNSDAI. The segment covering 996–1014 has biased composition (low complexity); that stretch reads SSTGAAGTLGTTGTAASGL. Polar residues predominate over residues 1033-1044; sequence SEPSDTQNSDAI. The LXXLL signature appears at 1051–1055; the sequence is LNLLL. The segment covering 1070–1089 has biased composition (low complexity); sequence SGASATSDSLGSSSLGCDTS. The tract at residues 1070–1108 is disordered; that stretch reads SGASATSDSLGSSSLGCDTSRSGAGSSDTSHTSKYFGSI. Polar residues predominate over residues 1090-1108; the sequence is RSGAGSSDTSHTSKYFGSI. Ser1126 is subject to Phosphoserine. The segment at 1157–1257 is CRY binding domain; the sequence is SRDLQAVLKE…LANPRKEAQT (101 aa). The segment at 1226–1257 is disordered; the sequence is EEDSPSLGLCDTSEAKEEESGQLANPRKEAQT.

As to quaternary structure, homodimer. Component of the circadian core oscillator, which includes the CRY proteins, CLOCK or NPAS2, BMAL1 or BMAL2, CSNK1D and/or CSNK1E, TIMELESS, and the PER proteins. Interacts with CLOCK-BMAL1 (off DNA). Interacts directly with PER1 and PER3, and through a C-terminal domain, with CRY1 and CRY2. Interacts (via PAS 2 domain) with TIMELESS. Interacts with NFIL3. Different large complexes have been identified with different repressive functions. The core of PER complexes is composed of at least PER1, PER2, PER3, CRY1, CRY2, CSNK1D and/or CSNK1E. The large PER complex involved in the repression of transcriptional termination is composed of at least PER2, CDK9, DDX5, DHX9, NCBP1 and POLR2A (active). The large PER complex involved in the histone deacetylation is composed of at least HDAC1, PER2, SFPQ and SIN3A. The large PER complex involved in the histone methylation is composed of at least PER2, CBX3, TRIM28, SUV39H1 and/or SUV39H2; CBX3 mediates the formation of the complex. Interacts with SETX; the interaction inhibits termination of circadian target genes. Interacts with the nuclear receptors HNF4A, NR1D1, NR4A2, RORA, PPARA, PPARG and THRA; the interaction with at least PPARG is ligand dependent. Interacts with PML. Interacts (phosphorylated) with BTRC and FBXW11; the interactions trigger proteasomal degradation. Interacts with NONO and SFPQ. Interacts with CAVIN3. Interacts with MAGEL2. Interacts with MAP1LC3B. Interacts with HNF4A. Post-translationally, acetylated. Deacetylated by SIRT1, resulting in decreased protein stability. Deacetylated by SIRT6, preventing its degradation by the proteasome, resulting in increased protein stability. In terms of processing, phosphorylated by CSNK1E and CSNK1D. Phosphorylation results in PER2 protein degradation. May be dephosphorylated by PP1. Ubiquitinated, leading to its proteasomal degradation. Ubiquitination may be inhibited by CRY1. Expressed in all tissues examined including eye, brain, heart, lung, spleen, liver, pancreas and kidney. In the CNS, highly expressed in the SCN, internal granular layer of granular cells of the olfactory bulb, tuberculum olfactorium, piriform cortex, gyrus dentatus of the hippocampus, cerebellum, pars tuberalis/median eminence, and pituitary, and moderately in the tenia tecta, caudate putamen, accumbens nucleus, superior and inferior colliculus and pineal gland.

The protein localises to the nucleus. It is found in the cytoplasm. Its subcellular location is the perinuclear region. Its function is as follows. Transcriptional repressor which forms a core component of the circadian clock. The circadian clock, an internal time-keeping system, regulates various physiological processes through the generation of approximately 24 hour circadian rhythms in gene expression, which are translated into rhythms in metabolism and behavior. It is derived from the Latin roots 'circa' (about) and 'diem' (day) and acts as an important regulator of a wide array of physiological functions including metabolism, sleep, body temperature, blood pressure, endocrine, immune, cardiovascular, and renal function. Consists of two major components: the central clock, residing in the suprachiasmatic nucleus (SCN) of the brain, and the peripheral clocks that are present in nearly every tissue and organ system. Both the central and peripheral clocks can be reset by environmental cues, also known as Zeitgebers (German for 'timegivers'). The predominant Zeitgeber for the central clock is light, which is sensed by retina and signals directly to the SCN. The central clock entrains the peripheral clocks through neuronal and hormonal signals, body temperature and feeding-related cues, aligning all clocks with the external light/dark cycle. Circadian rhythms allow an organism to achieve temporal homeostasis with its environment at the molecular level by regulating gene expression to create a peak of protein expression once every 24 hours to control when a particular physiological process is most active with respect to the solar day. Transcription and translation of core clock components (CLOCK, NPAS2, BMAL1, BMAL2, PER1, PER2, PER3, CRY1 and CRY2) plays a critical role in rhythm generation, whereas delays imposed by post-translational modifications (PTMs) are important for determining the period (tau) of the rhythms (tau refers to the period of a rhythm and is the length, in time, of one complete cycle). A diurnal rhythm is synchronized with the day/night cycle, while the ultradian and infradian rhythms have a period shorter and longer than 24 hours, respectively. Disruptions in the circadian rhythms contribute to the pathology of cardiovascular diseases, cancer, metabolic syndrome and aging. A transcription/translation feedback loop (TTFL) forms the core of the molecular circadian clock mechanism. Transcription factors, CLOCK or NPAS2 and BMAL1 or BMAL2, form the positive limb of the feedback loop, act in the form of a heterodimer and activate the transcription of core clock genes and clock-controlled genes (involved in key metabolic processes), harboring E-box elements (5'-CACGTG-3') within their promoters. The core clock genes: PER1/2/3 and CRY1/2 which are transcriptional repressors form the negative limb of the feedback loop and interact with the CLOCK|NPAS2-BMAL1|BMAL2 heterodimer inhibiting its activity and thereby negatively regulating their own expression. This heterodimer also activates nuclear receptors NR1D1/2 and RORA/B/G, which form a second feedback loop and which activate and repress BMAL1 transcription, respectively. PER1 and PER2 proteins transport CRY1 and CRY2 into the nucleus with appropriate circadian timing, but also contribute directly to repression of clock-controlled target genes through interaction with several classes of RNA-binding proteins, helicases and others transcriptional repressors. PER appears to regulate circadian control of transcription by at least three different modes. First, interacts directly with the CLOCK-BMAL1 at the tail end of the nascent transcript peak to recruit complexes containing the SIN3-HDAC that remodel chromatin to repress transcription. Second, brings H3K9 methyltransferases such as SUV39H1 and SUV39H2 to the E-box elements of the circadian target genes, like PER2 itself or PER1. The recruitment of each repressive modifier to the DNA seems to be very precisely temporally orchestrated by the large PER complex, the deacetylases acting before than the methyltransferases. Additionally, large PER complexes are also recruited to the target genes 3' termination site through interactions with RNA-binding proteins and helicases that may play a role in transcription termination to regulate transcription independently of CLOCK-BMAL1 interactions. Recruitment of large PER complexes to the elongating polymerase at PER and CRY termination sites inhibited SETX action, impeding RNA polymerase II release and thereby repressing transcriptional reinitiation. May propagate clock information to metabolic pathways via the interaction with nuclear receptors. Coactivator of PPARA and corepressor of NR1D1, binds rhythmically at the promoter of nuclear receptors target genes like BMAL1 or G6PC1. Directly and specifically represses PPARG proadipogenic activity by blocking PPARG recruitment to target promoters and thereby transcriptional activation. Required for fatty acid and lipid metabolism, is involved as well in the regulation of circulating insulin levels. Plays an important role in the maintenance of cardiovascular functions through the regulation of NO and vasodilatatory prostaglandins production in aortas. Controls circadian glutamate uptake in synaptic vesicles through the regulation of VGLUT1 expression. May also be involved in the regulation of inflammatory processes. Represses the CLOCK-BMAL1 induced transcription of BHLHE40/DEC1 and ATF4. Negatively regulates the formation of the TIMELESS-CRY1 complex by competing with TIMELESS for binding to CRY1. In Rattus norvegicus (Rat), this protein is Period circadian protein homolog 2.